Reading from the N-terminus, the 322-residue chain is MKIGNYQLKNNLIVAPMAGVTDRPFRELCLRYGAGMAVSEMMSANPKLWKTSKSKQRMVHEGESGIRSVQIAGSDPQLMADAAQFSVENGAQIIDINMGCPAKKVNKKLAGSALLQYPTIIEEILKAVVNAVDVPVTLKTRTGWDTDNKNCVQIAKLAEDCGIQALALHGRTKACMYKGEAEYDSIKAVKEAISIPVIANGDIDSPEKAKFVLEYTGADALMIGRPAQGRPWIFQEIHHYLENGTTMDELPTQEVKAIMLGHVNALHEFYGEYLGPRIARKHVGWYLKEHEQASEFRRTFNAIDAAPLQIEALEGYFDNVAS.

Residues 16–18 and glutamine 70 each bind FMN; that span reads PMA. The active-site Proton donor is the cysteine 100. Residues lysine 139, 200–202, and 224–225 contribute to the FMN site; these read NGD and GR.

It belongs to the Dus family. DusB subfamily. FMN is required as a cofactor.

The catalysed reaction is a 5,6-dihydrouridine in tRNA + NAD(+) = a uridine in tRNA + NADH + H(+). It catalyses the reaction a 5,6-dihydrouridine in tRNA + NADP(+) = a uridine in tRNA + NADPH + H(+). In terms of biological role, catalyzes the synthesis of 5,6-dihydrouridine (D), a modified base found in the D-loop of most tRNAs, via the reduction of the C5-C6 double bond in target uridines. This chain is tRNA-dihydrouridine synthase B, found in Vibrio parahaemolyticus serotype O3:K6 (strain RIMD 2210633).